The sequence spans 385 residues: Single-stranded DNA-binding protein 4 (385 aa).

Position 1 is an N-acetylmethionine (Met-1). One can recognise a LisH domain in the interval 17–49; sequence AREKLALYVYEYLLHIGAQKSAQTFLSEIRWEK. Disordered regions lie at residues 122–287 and 331–363; these read FQGP…NSSE and GSGD…GEMA. The span at 245–263 shows a compositional bias: low complexity; that stretch reads SPSGNSIPYSSSSPGSYTG. Over residues 267 to 277 the composition is skewed to pro residues; it reads GGGPPGTPIMP. At Ser-341 the chain carries Phosphoserine. A Phosphothreonine modification is found at Thr-355.

It localises to the nucleus. This is Single-stranded DNA-binding protein 4 (SSBP4) from Homo sapiens (Human).